Consider the following 223-residue polypeptide: Homeobox protein egl-5 (223 aa).

The span at M1–S25 shows a compositional bias: low complexity. Disordered regions lie at residues M1–A58 and K168–G191. The segment at residues S112–K171 is a DNA-binding region (homeobox).

The protein belongs to the Abd-B homeobox family. In terms of assembly, interacts with the TCF transcription factor pop-1.

Its subcellular location is the nucleus. Its function is as follows. Involved in control of cell fate and pattern formation along the anterior-posterior axis, acting mainly in the tail. Required during embryonic and postembryonic development. Essential for the determination of specific neurons, including the PLM touch neurons. Plays a role in neural fate specification in the hermaphrodite-specific neuron (HSN)/PHB neuron lineage, acting in concert with T-box protein tbx-2 and the asymmetric cell division protein ham-1. Required for male gonadal fate determination, acting in parallel with a WNT/beta-catenin pathway, perhaps by recruiting pop-1 to male-specific gonadal target genes. Involved in development of the hermaphrodite hindgut, and for the response to rectal infection by the coryneform bacterium M.nematophilum. The protein is Homeobox protein egl-5 of Caenorhabditis elegans.